Here is a 235-residue protein sequence, read N- to C-terminus: RNA polymerase sigma-E factor (235 aa).

The Polymerase core binding motif lies at 82 to 95 (DLISVGTIGLIKAV). The segment at residues 202-221 (QKEVADMLGISQSYISRLEK) is a DNA-binding region (H-T-H motif).

Belongs to the sigma-70 factor family.

In terms of biological role, sigma factors are initiation factors that promote the attachment of RNA polymerase to specific initiation sites and are then released. This sigma factor is responsible for the expression of sporulation specific genes. In Clostridium acetobutylicum (strain ATCC 824 / DSM 792 / JCM 1419 / IAM 19013 / LMG 5710 / NBRC 13948 / NRRL B-527 / VKM B-1787 / 2291 / W), this protein is RNA polymerase sigma-E factor (sigE).